The sequence spans 155 residues: Protein FAM162A (155 aa).

Residues 77 to 103 (RFKKEEEIPETISFEMLDAAKNKIRVK) are required for proapoptotic activity. A helical transmembrane segment spans residues 102–121 (VKVSYLMIALTVAGCVYMVI).

It belongs to the UPF0389 family. As to quaternary structure, interacts with HSP90AB1; HSP90AB1 is essential for FAM162A mitochondrial localization and pro-apoptotic activity. Interacts with VDAC2; the interaction is probably involved in inducing mitochondrial permeability transition.

Its subcellular location is the mitochondrion membrane. Proposed to be involved in regulation of apoptosis; the exact mechanism may differ between cell types/tissues. May be involved in hypoxia-induced cell death of transformed cells implicating cytochrome C release and caspase activation (such as CASP9) and inducing mitochondrial permeability transition. May be involved in hypoxia-induced cell death of neuronal cells probably by promoting release of AIFM1 from mitochondria to cytoplasm and its translocation to the nucleus; however, the involvement of caspases has been reported conflictingly. The chain is Protein FAM162A (Fam162a) from Rattus norvegicus (Rat).